The chain runs to 530 residues: Glutamate--tRNA ligase (530 aa).

Residues 26 to 36 (PSPTGKAHIGT) carry the 'HIGH' region motif. Residues 267-271 (KLSKR) carry the 'KMSKS' region motif. Residue Lys270 coordinates ATP.

This sequence belongs to the class-I aminoacyl-tRNA synthetase family. Glutamate--tRNA ligase type 1 subfamily. In terms of assembly, monomer.

The protein localises to the cytoplasm. It carries out the reaction tRNA(Glu) + L-glutamate + ATP = L-glutamyl-tRNA(Glu) + AMP + diphosphate. Functionally, catalyzes the attachment of glutamate to tRNA(Glu) in a two-step reaction: glutamate is first activated by ATP to form Glu-AMP and then transferred to the acceptor end of tRNA(Glu). The chain is Glutamate--tRNA ligase from Gloeobacter violaceus (strain ATCC 29082 / PCC 7421).